Consider the following 341-residue polypeptide: Very-long-chain 3-oxoacyl-CoA reductase (341 aa).

A helical transmembrane segment spans residues 15 to 35; the sequence is VVTAFSVIGIVFTILKFTSFA. Positions 61, 115, 142, 177, 216, 220, 249, and 251 each coordinate NADP(+). Residue tyrosine 216 is the Proton donor of the active site. Lysine 220 functions as the Lowers pKa of active site Tyr in the catalytic mechanism.

The protein belongs to the short-chain dehydrogenases/reductases (SDR) family.

Its subcellular location is the endoplasmic reticulum membrane. The catalysed reaction is a very-long-chain (3R)-3-hydroxyacyl-CoA + NADP(+) = a very-long-chain 3-oxoacyl-CoA + NADPH + H(+). It functions in the pathway lipid metabolism; fatty acid biosynthesis. Its function is as follows. Component of the microsomal membrane bound fatty acid elongation system, which produces the 26-carbon very long-chain fatty acids (VLCFA) from palmitate. Catalyzes the reduction of the 3-ketoacyl-CoA intermediate that is formed in each cycle of fatty acid elongation. VLCFAs serve as precursors for ceramide and sphingolipids. The sequence is that of Very-long-chain 3-oxoacyl-CoA reductase from Schizosaccharomyces pombe (strain 972 / ATCC 24843) (Fission yeast).